The primary structure comprises 688 residues: MADLEAVLADVSYLMAMEKSKATPAARASKKIVLPEPSIRSVMQKYLEERHEITFDKIFNQRIGFLLFKDFCLNEINEAVPQVKFYEEIKEYEKLENEEDRLCRSRQIYDTYIMKELLSCSHPFSKQAVEHVQSHLSKKQVTSTLFQPYIEEICESLRGSIFQKFMESDKFTRFCQWKNVELNIHLTMNDFSVHRIIGRGGFGEVYGCRKADTGKMYAMKCLDKKRIKMKQGETLALNERIMLSLVSTGDCPFIVCMTYAFHTPDKLCFILDLMNGGDLHYHLSQHGVFSEKEMRFYATEIILGLEHMHNRFVVYRDLKPANILLDEHGHVRISDLGLACDFSKKKPHASVGTHGYMAPEVLQKGTAYDSSADWFSLGCMLFKLLRGHSPFRQHKTKDKHEIDRMTLTMNVELPDVFSPELKSLLEGLLQRDVSKRLGCHGGSAQELKTHDFFRGIDWQHVYLQKYPPPLIPPRGEVNAADAFDIGSFDEEDTKGIKLLDCDQELYKNFPLVISERWQQEVAETVYEAVNADTDKIEARKRAKNKQLGHEEDYALGRDCIVHGYMLKLGNPFLTQWQRRYFYLFPNRLEWRGEGESRQSLLTMEQIVSVEETQIKDKKCILLRIKGGKQFVLQCESDPEFVQWKKELTETFMEAQRLLRRAPKFLNKSRSAVVELSKPPLCHRNSNGL.

Positions 1–190 (MADLEAVLAD…ELNIHLTMND (190 aa)) are N-terminal. Positions 54–175 (TFDKIFNQRI…MESDKFTRFC (122 aa)) constitute an RGS domain. The Protein kinase domain occupies 191–453 (FSVHRIIGRG…AQELKTHDFF (263 aa)). ATP is bound by residues 197-205 (IGRGGFGEV) and Lys-220. The active-site Proton acceptor is the Asp-317. In terms of domain architecture, AGC-kinase C-terminal spans 454-521 (RGIDWQHVYL…VISERWQQEV (68 aa)). The PH domain occupies 558–652 (DCIVHGYMLK…WKKELTETFM (95 aa)).

It belongs to the protein kinase superfamily. AGC Ser/Thr protein kinase family. GPRK subfamily. As to quaternary structure, interacts with GIT1. In terms of processing, ubiquitinated. Ubiquitous; brain, spleen &gt; heart, lung &gt; kidney.

Its subcellular location is the postsynapse. The protein resides in the presynapse. The enzyme catalyses [beta-adrenergic receptor] + ATP = [beta-adrenergic receptor]-phosphate + ADP + H(+). Its function is as follows. Specifically phosphorylates the agonist-occupied form of the beta-adrenergic and closely related receptors. The chain is G protein-coupled receptor kinase 3 from Bos taurus (Bovine).